Consider the following 106-residue polypeptide: Ribonuclease P protein component 4 (106 aa).

Residues C57, C60, C83, and C86 each contribute to the Zn(2+) site.

The protein belongs to the eukaryotic/archaeal RNase P protein component 4 family. In terms of assembly, consists of a catalytic RNA component and at least 4-5 protein subunits. The cofactor is Zn(2+).

Its subcellular location is the cytoplasm. It carries out the reaction Endonucleolytic cleavage of RNA, removing 5'-extranucleotides from tRNA precursor.. Part of ribonuclease P, a protein complex that generates mature tRNA molecules by cleaving their 5'-ends. The chain is Ribonuclease P protein component 4 from Saccharolobus solfataricus (strain ATCC 35092 / DSM 1617 / JCM 11322 / P2) (Sulfolobus solfataricus).